A 459-amino-acid polypeptide reads, in one-letter code: MKKDKKRNKIPIDNYPIQTLVNMSLNPSRPSSSELVELHVFYVPEGSWNYKLNTISTEVVNKFISAGFLRVSPQLTLRALRERLGEFLGEDAIAEKFLFLKCIGNNLAVVKEKQESELKLKSFAPPYALQPELYLLPVMDHLGNVYSPSTVILDERQTNNGVNEADGTIHRPISVTLFKEELGRDPSLLENTLKELPNKNQEEAGGKATAEKSQIAKNQIGNSELPGSLEDSNNDCFGTKKSQCLWENEDDTAISRRQDNQTAEKEYITLPDHPSLPCQPVLSSGITDISLLQTEREKIIKQMKQVKEERRYLERNREELVKTVEKLFEQSKLKRYHAYNGWKKKYLETKKVTASMEEVLTKLREDLELYYKKLLMQLEAREIKMRPKNLANITDSKNYLIIQITEVQHAIDQLKRKLDTDKMKLIVEVKMRKQAVSDLRTLKTELAQKKKIIHLYNLN.

The span at 193–205 (LKELPNKNQEEAG) shows a compositional bias: basic and acidic residues. Residues 193-213 (LKELPNKNQEEAGGKATAEKS) form a disordered region. Coiled-coil stretches lie at residues 287–374 (TDIS…YKKL) and 400–453 (LIIQ…KKII).

Interacts with IFT20.

It localises to the cytoplasmic vesicle. The protein localises to the secretory vesicle. The protein resides in the acrosome. In Homo sapiens (Human), this protein is Spermatogenesis-associated protein 1 (SPATA1).